Consider the following 478-residue polypeptide: GDP-fucose protein O-fucosyltransferase 3 (478 aa).

Over 1–8 (MVWIQRRR) the chain is Cytoplasmic. Residues 9–31 (LLASCLCITATVFLLVTLQVVVE) traverse the membrane as a helical; Signal-anchor for type II membrane protein segment. At 32–478 (LGKFERKKFK…QEFWALVFKD (447 aa)) the chain is on the lumenal side. N-linked (GlcNAc...) asparagine glycosylation is found at N110 and N168. C389 and C392 form a disulfide bridge.

It belongs to the glycosyltransferase 10 family.

It is found in the endoplasmic reticulum membrane. The catalysed reaction is L-threonyl-[protein] + GDP-beta-L-fucose = 3-O-(alpha-L-fucosyl)-L-threonyl-[protein] + GDP + H(+). The enzyme catalyses L-seryl-[protein] + GDP-beta-L-fucose = 3-O-(alpha-L-fucosyl)-L-seryl-[protein] + GDP + H(+). The protein operates within protein modification; protein glycosylation. Protein O-fucosyltransferase that specifically catalyzes O-fucosylation of serine or threonine residues in EMI domains of target proteins, such as MMRN1, MMRN2 and EMID1. Attaches fucose through an O-glycosidic linkage. O-fucosylation of EMI domain-containing proteins may be required for facilitating protein folding and secretion. May also show alpha-(1,3)-fucosyltransferase activity toward the innermost N-acetyl glucosamine (GlcNAc) residue in biantennary N-glycan acceptors. However, this was tested with a library of synthetic substrates and this activity is unsure in vivo. May be involved in biosynthesis of Lewis X-carrying biantennary N-glycans that regulate neuron stem cell self-renewal during brain development. The chain is GDP-fucose protein O-fucosyltransferase 3 (FUT10) from Canis lupus familiaris (Dog).